Reading from the N-terminus, the 216-residue chain is LHFPL tetraspan subfamily member 3 protein (216 aa).

Transmembrane regions (helical) follow at residues 22-42 (IGVL…VCFV), 96-116 (FFIG…ALFF), 126-146 (ICGW…MIYP), and 177-197 (ILAI…FVLG).

This sequence belongs to the LHFP family.

The protein resides in the membrane. The polypeptide is LHFPL tetraspan subfamily member 3 protein (Danio rerio (Zebrafish)).